Reading from the N-terminus, the 375-residue chain is WAT1-related protein At1g70260 (375 aa).

The next 10 membrane-spanning stretches (helical) occupy residues 10–30 (LVPF…TIMA), 41–61 (FVFV…FSFL), 72–92 (IFSW…IFMF), 106–126 (IVVC…SIIL), 143–163 (MGTI…GPFI), 191–211 (WFLG…FNVV), 225–245 (VASF…LFME), 259–278 (LYLI…SVHV), 289–309 (VPLF…SFFV), and 312–332 (LHYG…TVSW). One can recognise an EamA domain in the interval 25–134 (ALTIMAKTAL…ILGRSKLDWR (110 aa)). Residues 337 to 356 (ESEEKQSSNEERKSIKTIHH) are disordered.

The protein belongs to the drug/metabolite transporter (DMT) superfamily. Plant drug/metabolite exporter (P-DME) (TC 2.A.7.4) family.

The protein localises to the membrane. This chain is WAT1-related protein At1g70260, found in Arabidopsis thaliana (Mouse-ear cress).